The chain runs to 185 residues: Ribosome-recycling factor (185 aa).

The protein belongs to the RRF family.

The protein localises to the cytoplasm. In terms of biological role, responsible for the release of ribosomes from messenger RNA at the termination of protein biosynthesis. May increase the efficiency of translation by recycling ribosomes from one round of translation to another. This chain is Ribosome-recycling factor, found in Xanthomonas oryzae pv. oryzae (strain MAFF 311018).